A 309-amino-acid polypeptide reads, in one-letter code: MQLQKLVNMFGGDLTRRYGQKVHKLTLHGGFSCPNRDGTIGRGGCTFCNVASFADEAQQHRSIAEQLAHQANLVNRAKRYLAYFQAYTSTFAEVQVLRSMYQQAVSQANIVGLCVGTRPDCVPDAVLDLLCEYKDQGYEVWLELGLQTAHDKTLHRINRGHDFACYQRTTQLARQRGLKVCSHLIVGLPGEGQAECLQTLERVVETGVDGIKLHPLHIVKGSIMAKAWEAGRLNGIELEDYTLTAGEMIRHTPPEVIYHRISASARRPTLLAPLWCENRWTGMVELDRYLNEHGVQGSALGRPWLPPTE.

Residues 17–254 (RYGQKVHKLT…AGEMIRHTPP (238 aa)) form the Radical SAM core domain. [4Fe-4S] cluster contacts are provided by C33, C45, and C48.

Belongs to the radical SAM superfamily. Requires [4Fe-4S] cluster as cofactor.

This is an uncharacterized protein from Escherichia coli O157:H7.